We begin with the raw amino-acid sequence, 586 residues long: MTIDDELRDRIKRSAKKHALLNAVKHKSDAEVGAIMGPLMGENPEFRPHGDAIPGIVSGVVSQINDLSVDERRSRLETIAPEALTDIESEDTTDTYDLPSLPGVSDDEPTQSVRMRAAPNPNGPWHIGHARMPAVIGTYSNRYDGSFIIRFDDTDPETKRPDLDAYDDILEDVAYLGFEPDDVIRASDRLELYYARARELIDAGGAYTCSCSGEHFSKLKNAGEACPHREKSVNQTQTEFEAMIHGEYSAGEMVLRVRTDIEHKNPALRDWVAFRLIDTPHPRPQAADYRCWPMLDFQSGIDDHETGVTHIIRGIDLQDSAKRQRFVYDYFDWEYPEVVHWGHINVDEYDVSLSTSTLIEKIETGELDGWDDPRAPTLQSLRRRGIKGDAIVEAMINLGTSTTNVELSMSSIYSNNRQHIDAKADRYFFVRNGETFTLETASEDTIAGHPPLHPDNPERGERVVPVTDGITIEPADVPADGDRVWLKGYACVRRDDNHFRTTNDGIEVVREGDVDVIHWAPAPESSASISVRMRTPDGDITGIAEPDLTDAEIDDIVQFERVGFARIDTKDEQSLDTDMTVYWTHP.

Positions 84–111 (LTDIESEDTTDTYDLPSLPGVSDDEPTQ) are disordered. Acidic residues predominate over residues 85 to 94 (TDIESEDTTD). The short motif at 119 to 129 (PNPNGPWHIGH) is the 'HIGH' region element.

Belongs to the class-I aminoacyl-tRNA synthetase family. Glutamate--tRNA ligase type 2 subfamily.

It is found in the cytoplasm. The enzyme catalyses tRNA(Glu) + L-glutamate + ATP = L-glutamyl-tRNA(Glu) + AMP + diphosphate. Catalyzes the attachment of glutamate to tRNA(Glu) in a two-step reaction: glutamate is first activated by ATP to form Glu-AMP and then transferred to the acceptor end of tRNA(Glu). In Haloquadratum walsbyi (strain DSM 16790 / HBSQ001), this protein is Glutamate--tRNA ligase.